The chain runs to 877 residues: Neurotrypsin (877 aa).

The N-terminal stretch at 1 to 20 (MTLARFVLALVLGALPEVVS) is a signal peptide. Residue Asn-26 is glycosylated (N-linked (GlcNAc...) asparagine). A disordered region spans residues 31 to 90 (HRHRHRHSPPPGLQYPYYLPTQQRPPRTRPPPPLPRFPRPPRALPAQRPHALQAGHTPRP). A compositionally biased stretch (low complexity) spans 44 to 55 (QYPYYLPTQQRP). Over residues 58–73 (TRPPPPLPRFPRPPRA) the composition is skewed to pro residues. A Kringle domain is found at 95 to 167 (CPAGEPWVSV…GKVDWGYCDC (73 aa)). 20 cysteine pairs are disulfide-bonded: Cys-95/Cys-167, Cys-111/Cys-151, Cys-140/Cys-165, Cys-197/Cys-261, Cys-210/Cys-271, Cys-241/Cys-251, Cys-307/Cys-371, Cys-320/Cys-381, Cys-351/Cys-361, Cys-414/Cys-477, Cys-427/Cys-487, Cys-457/Cys-467, Cys-527/Cys-591, Cys-540/Cys-601, Cys-571/Cys-581, Cys-621/Cys-752, Cys-663/Cys-679, Cys-767/Cys-833, Cys-796/Cys-810, and Cys-823/Cys-852. 4 consecutive SRCR domains span residues 172–273 (VRLR…TCSF), 282–383 (IRLV…SCTP), 389–489 (IRLA…ACYP), and 502–603 (VRLM…ICDY). The tract at residues 621 to 632 (CGLRLLHRRQKR) is zymogen activation region. The 244-residue stretch at 633-876 (IIGGKNSLRG…FVPWIKSVTK (244 aa)) folds into the Peptidase S1 domain. The Charge relay system role is filled by His-678. N-linked (GlcNAc...) asparagine glycosylation occurs at Asn-685. Asp-728 serves as the catalytic Charge relay system. Ser-827 (charge relay system) is an active-site residue.

It belongs to the peptidase S1 family.

The protein resides in the secreted. Its function is as follows. Plays a role in neuronal plasticity and the proteolytic action may subserve structural reorganizations associated with learning and memory operations. The polypeptide is Neurotrypsin (PRSS12) (Pongo pygmaeus (Bornean orangutan)).